Reading from the N-terminus, the 189-residue chain is Mediator of RNA polymerase II transcription subunit 10b (189 aa).

A disordered region spans residues 1-22 (MDPTQNTSAGIGGSNGTIRYQT).

It belongs to the Mediator complex subunit 10 family. As to quaternary structure, component of the Mediator complex.

It localises to the nucleus. Component of the Mediator complex, a coactivator involved in the regulated transcription of nearly all RNA polymerase II-dependent genes. Mediator functions as a bridge to convey information from gene-specific regulatory proteins to the basal RNA polymerase II transcription machinery. The Mediator complex, having a compact conformation in its free form, is recruited to promoters by direct interactions with regulatory proteins and serves for the assembly of a functional preinitiation complex with RNA polymerase II and the general transcription factors. The sequence is that of Mediator of RNA polymerase II transcription subunit 10b (MED10B) from Arabidopsis thaliana (Mouse-ear cress).